A 157-amino-acid chain; its full sequence is Small ribosomal subunit protein uS7 (157 aa).

The protein belongs to the universal ribosomal protein uS7 family. As to quaternary structure, part of the 30S ribosomal subunit. Contacts proteins S9 and S11.

Functionally, one of the primary rRNA binding proteins, it binds directly to 16S rRNA where it nucleates assembly of the head domain of the 30S subunit. Is located at the subunit interface close to the decoding center, probably blocks exit of the E-site tRNA. The polypeptide is Small ribosomal subunit protein uS7 (Borrelia garinii subsp. bavariensis (strain ATCC BAA-2496 / DSM 23469 / PBi) (Borreliella bavariensis)).